The primary structure comprises 292 residues: NAD kinase (292 aa).

The active-site Proton acceptor is the D73. NAD(+) contacts are provided by residues 73–74 (DG), 147–148 (NE), H158, R175, D177, 188–193 (TAYSLS), and Q247.

This sequence belongs to the NAD kinase family. A divalent metal cation serves as cofactor.

The protein localises to the cytoplasm. It carries out the reaction NAD(+) + ATP = ADP + NADP(+) + H(+). Functionally, involved in the regulation of the intracellular balance of NAD and NADP, and is a key enzyme in the biosynthesis of NADP. Catalyzes specifically the phosphorylation on 2'-hydroxyl of the adenosine moiety of NAD to yield NADP. In Edwardsiella ictaluri (strain 93-146), this protein is NAD kinase.